A 103-amino-acid polypeptide reads, in one-letter code: Large ribosomal subunit protein bL21 (103 aa).

Belongs to the bacterial ribosomal protein bL21 family. Part of the 50S ribosomal subunit. Contacts protein L20.

Functionally, this protein binds to 23S rRNA in the presence of protein L20. The chain is Large ribosomal subunit protein bL21 from Thermobifida fusca (strain YX).